We begin with the raw amino-acid sequence, 29 residues long: Mycofactocin precursor peptide (29 aa).

It belongs to the mycofactocin precursor peptide family. In terms of processing, the post-translational modifications that lead to mycofactocin involve oxidative decarboxylation of the C-terminal tyrosine residue catalyzed by MftC, introduction of a tyramine-valine cross-link, removal of the modified C-terminal dipeptide by MftE. The released dipeptide then undergoes oxidative deamination by MftD, glycosylation by MftF and methylation by an unknown enzyme.

Precursor peptide that leads to mycofactocin (MFT) after extensive post-translational modifications by enzymes encoded by adjacent genes. Mycofactocin acts as a redox cofactor of nicotinamide-dependent oxidoreductases encoded in the same locus. The polypeptide is Mycofactocin precursor peptide (Mycobacterium tuberculosis (strain ATCC 25618 / H37Rv)).